A 293-amino-acid chain; its full sequence is Phosphatidylglycerol--prolipoprotein diacylglyceryl transferase (293 aa).

Helical transmembrane passes span 45–65, 81–101, 115–135, and 144–164; these read FELR…YFVA, ELIF…YVLF, IWEG…TGFL, and FTFL…QAIG. Arg-165 lines the a 1,2-diacyl-sn-glycero-3-phospho-(1'-sn-glycerol) pocket. The next 3 membrane-spanning stretches (helical) occupy residues 204–224, 231–249, and 262–282; these read PTFL…SVYF, HGEV…RIVI, and IKAA…GFLI.

Belongs to the Lgt family.

The protein resides in the cell inner membrane. The enzyme catalyses L-cysteinyl-[prolipoprotein] + a 1,2-diacyl-sn-glycero-3-phospho-(1'-sn-glycerol) = an S-1,2-diacyl-sn-glyceryl-L-cysteinyl-[prolipoprotein] + sn-glycerol 1-phosphate + H(+). The protein operates within protein modification; lipoprotein biosynthesis (diacylglyceryl transfer). Functionally, catalyzes the transfer of the diacylglyceryl group from phosphatidylglycerol to the sulfhydryl group of the N-terminal cysteine of a prolipoprotein, the first step in the formation of mature lipoproteins. The protein is Phosphatidylglycerol--prolipoprotein diacylglyceryl transferase of Thermotoga maritima (strain ATCC 43589 / DSM 3109 / JCM 10099 / NBRC 100826 / MSB8).